The chain runs to 452 residues: Adenylosuccinate synthetase (452 aa).

Residues 40-46 (GDEGKGK) and 68-70 (GHT) contribute to the GTP site. Catalysis depends on D41, which acts as the Proton acceptor. Residues D41 and G68 each contribute to the Mg(2+) site. Residues 41 to 44 (DEGK), 66 to 69 (NAGH), T158, R172, N250, T265, and R329 each bind IMP. H69 functions as the Proton donor in the catalytic mechanism. A substrate-binding site is contributed by 325 to 331 (VTTKRKR). Residues R331, 357-359 (KLD), and 440-442 (GVG) contribute to the GTP site.

It belongs to the adenylosuccinate synthetase family. Homodimer. Requires Mg(2+) as cofactor.

It is found in the cytoplasm. The catalysed reaction is IMP + L-aspartate + GTP = N(6)-(1,2-dicarboxyethyl)-AMP + GDP + phosphate + 2 H(+). The protein operates within purine metabolism; AMP biosynthesis via de novo pathway; AMP from IMP: step 1/2. In terms of biological role, plays an important role in the de novo pathway and in the salvage pathway of purine nucleotide biosynthesis. Catalyzes the first committed step in the biosynthesis of AMP from IMP. This is Adenylosuccinate synthetase from Drosophila grimshawi (Hawaiian fruit fly).